The primary structure comprises 149 residues: Large ribosomal subunit protein bL9 (149 aa).

The protein belongs to the bacterial ribosomal protein bL9 family.

Its function is as follows. Binds to the 23S rRNA. The sequence is that of Large ribosomal subunit protein bL9 from Teredinibacter turnerae (strain ATCC 39867 / T7901).